A 118-amino-acid polypeptide reads, in one-letter code: UPF0125 protein RSc1426 (118 aa).

It belongs to the UPF0125 (RnfH) family.

The sequence is that of UPF0125 protein RSc1426 from Ralstonia nicotianae (strain ATCC BAA-1114 / GMI1000) (Ralstonia solanacearum).